The primary structure comprises 406 residues: Accessory Sec system protein translocase subunit SecY2 (406 aa).

The next 10 helical transmembrane spans lie at 14–34 (SWTV…LPFI), 63–83 (FSLF…WQMF), 108–128 (FAIA…EVGI), 131–151 (GLAI…LVWL), 156–176 (SFFG…ANLP), 190–210 (LPII…AVIV), 246–266 (FMYA…IQIL), 285–305 (PIWL…FAFV), 344–364 (AVIG…IVLI), and 368–388 (YLQL…VYNV).

It belongs to the SecY/SEC61-alpha family. SecY2 subfamily. Component of the accessory SecA2/SecY2 protein translocase complex required to export cell wall proteins. May form heterotrimers with SecE and SecG subunits.

Its subcellular location is the cell membrane. Functionally, part of the accessory SecA2/SecY2 system specifically required for export of possible cell wall proteins. The central subunit of a protein translocation channel. The polypeptide is Accessory Sec system protein translocase subunit SecY2 (Streptococcus salivarius (strain CCHSS3)).